Here is a 103-residue protein sequence, read N- to C-terminus: Large ribosomal subunit protein bL21 (103 aa).

Belongs to the bacterial ribosomal protein bL21 family. Part of the 50S ribosomal subunit. Contacts protein L20.

This protein binds to 23S rRNA in the presence of protein L20. This Acetivibrio thermocellus (strain ATCC 27405 / DSM 1237 / JCM 9322 / NBRC 103400 / NCIMB 10682 / NRRL B-4536 / VPI 7372) (Clostridium thermocellum) protein is Large ribosomal subunit protein bL21.